A 323-amino-acid polypeptide reads, in one-letter code: Putative divalent cation/proton antiporter TMEM165 (323 aa).

The first 33 residues, 1–33 (MAAAARGSGRAPTRRLLVLLLLQLLWAPAGVRA), serve as a signal peptide directing secretion. Residues 34-89 (GPEEDLSHRNQEPPAPAQQLQPQPAAVQGLEPARAEKGLTPVAPVHTNKEDAAAQT) lie on the Lumenal side of the membrane. Residues 35–44 (PEEDLSHRNQ) are compositionally biased toward basic and acidic residues. The segment at 35 to 60 (PEEDLSHRNQEPPAPAQQLQPQPAAV) is disordered. Residues 50–59 (AQQLQPQPAA) show a composition bias toward low complexity. The chain crosses the membrane as a helical span at residues 90–110 (NLGFIHAFVAAISVIIVSELG). Topologically, residues 111–126 (DKTFFIAAIMAMRYNR) are cytoplasmic. A helical transmembrane segment spans residues 127–147 (LTVLAGAMLALALMTCLSVLF). At 148–151 (GYAT) the chain is on the lumenal side. Residues 152–172 (TVIPRVYTYYVSTALFAIFGI) form a helical membrane-spanning segment. Residues 173 to 227 (RMLREGLKMSPDEGQEELEEVQAELKKKDEEFQRTKLLNGPDVETGTSTAIPQKK) lie on the Cytoplasmic side of the membrane. Residues 184 to 211 (DEGQEELEEVQAELKKKDEEFQRTKLLN) adopt a coiled-coil conformation. A helical membrane pass occupies residues 228–248 (WLHFISPIFVQALTLTFLAEW). Residues 249–266 (GDRSQLTTIVLAAREDPY) are Lumenal-facing. The helical transmembrane segment at 267-287 (GVAVGGTVGHCLCTGLAVIGG) threads the bilayer. Topologically, residues 288-298 (RMIAQKISVRT) are cytoplasmic. Residues 299–319 (VTIIGGIVFLAFAFSALFISP) traverse the membrane as a helical segment. Topologically, residues 320–323 (ESGF) are lumenal.

This sequence belongs to the GDT1 family. Expressed in mammary epithelial cells (at protein level).

It is found in the golgi apparatus membrane. The enzyme catalyses Ca(2+)(in) + n H(+)(out) = Ca(2+)(out) + n H(+)(in). It carries out the reaction Mn(2+)(in) + n H(+)(out) = Mn(2+)(out) + n H(+)(in). In terms of biological role, putative divalent cation:proton antiporter that exchanges calcium or manganese ions for protons across the Golgi membrane. Mediates the reversible transport of calcium or manganese to the Golgi lumen driven by the proton gradient and possibly the membrane potential generated by V-ATPase. Provides calcium or manganese cofactors to resident Golgi enzymes and contributes to the maintenance of an acidic luminal Golgi pH required for proper functioning of the secretory pathway. Promotes Ca(2+) storage within the Golgi lumen of the mammary epithelial cells to be then secreted into milk. The transport mechanism and stoichiometry remains to be elucidated. The chain is Putative divalent cation/proton antiporter TMEM165 from Mus musculus (Mouse).